Reading from the N-terminus, the 525-residue chain is GMP synthase [glutamine-hydrolyzing] (525 aa).

The Glutamine amidotransferase type-1 domain occupies 8-207; that stretch reads KILILDFGSQ…ALEICACAAN (200 aa). Residue C85 is the Nucleophile of the active site. Residues H181 and E183 contribute to the active site. One can recognise a GMPS ATP-PPase domain in the interval 208–400; sequence WKPASIIEDA…LGLPYNMLYR (193 aa). 235–241 serves as a coordination point for ATP; it reads SGGVDSS.

In terms of assembly, homodimer.

It carries out the reaction XMP + L-glutamine + ATP + H2O = GMP + L-glutamate + AMP + diphosphate + 2 H(+). The protein operates within purine metabolism; GMP biosynthesis; GMP from XMP (L-Gln route): step 1/1. In terms of biological role, catalyzes the synthesis of GMP from XMP. This Shewanella halifaxensis (strain HAW-EB4) protein is GMP synthase [glutamine-hydrolyzing].